The sequence spans 295 residues: Phosphatidylserine decarboxylase proenzyme (295 aa).

Active-site charge relay system; for autoendoproteolytic cleavage activity residues include Asp-113, His-169, and Ser-256. Catalysis depends on Ser-256, which acts as the Schiff-base intermediate with substrate; via pyruvic acid; for decarboxylase activity. Ser-256 carries the pyruvic acid (Ser); by autocatalysis modification.

It belongs to the phosphatidylserine decarboxylase family. PSD-B subfamily. Prokaryotic type II sub-subfamily. As to quaternary structure, heterodimer of a large membrane-associated beta subunit and a small pyruvoyl-containing alpha subunit. Pyruvate is required as a cofactor. In terms of processing, is synthesized initially as an inactive proenzyme. Formation of the active enzyme involves a self-maturation process in which the active site pyruvoyl group is generated from an internal serine residue via an autocatalytic post-translational modification. Two non-identical subunits are generated from the proenzyme in this reaction, and the pyruvate is formed at the N-terminus of the alpha chain, which is derived from the carboxyl end of the proenzyme. The autoendoproteolytic cleavage occurs by a canonical serine protease mechanism, in which the side chain hydroxyl group of the serine supplies its oxygen atom to form the C-terminus of the beta chain, while the remainder of the serine residue undergoes an oxidative deamination to produce ammonia and the pyruvoyl prosthetic group on the alpha chain. During this reaction, the Ser that is part of the protease active site of the proenzyme becomes the pyruvoyl prosthetic group, which constitutes an essential element of the active site of the mature decarboxylase.

It localises to the cell membrane. It catalyses the reaction a 1,2-diacyl-sn-glycero-3-phospho-L-serine + H(+) = a 1,2-diacyl-sn-glycero-3-phosphoethanolamine + CO2. The protein operates within phospholipid metabolism; phosphatidylethanolamine biosynthesis; phosphatidylethanolamine from CDP-diacylglycerol: step 2/2. Its function is as follows. Catalyzes the formation of phosphatidylethanolamine (PtdEtn) from phosphatidylserine (PtdSer). The sequence is that of Phosphatidylserine decarboxylase proenzyme from Clostridium botulinum (strain ATCC 19397 / Type A).